A 365-amino-acid polypeptide reads, in one-letter code: MFEVNPVLNKLKELSERTELLRGYLDYDAKKERLEEVSAELEQPEVWNEPERAQALGKERSALESVVATIDVLTQGAEDVEMLVSLAVEGEDEETFHEAETEADALEKKLVDLEFRRMFSGQHDASDCYMDIQSGSGGTEAQDWADMVLRMYLRWGEAHGYKPELIECSDGDVAGIKSATIKFTGEYAFGWLRTETGVHRLVRKSPFDSGGRRHTSFCSAFVYPEIDEDVEIEINPADLRIDVYRASGAGGQHVNRTESAVRITHIPTNTVTQCQNDRSQHKNKDQAMKQLKAKLYELEMMKQNAEKQALEETKSDIGWGSQIRSYVLDDSRIKDLRTGVETRNTQSVLDGDLDKFIEASLKSGL.

An N5-methylglutamine modification is found at Q252.

It belongs to the prokaryotic/mitochondrial release factor family. Methylated by PrmC. Methylation increases the termination efficiency of RF2.

The protein resides in the cytoplasm. Functionally, peptide chain release factor 2 directs the termination of translation in response to the peptide chain termination codons UGA and UAA. This chain is Peptide chain release factor 2, found in Tolumonas auensis (strain DSM 9187 / NBRC 110442 / TA 4).